Here is a 222-residue protein sequence, read N- to C-terminus: PKHD-type hydroxylase Syncc9902_2001 (222 aa).

In terms of domain architecture, Fe2OG dioxygenase spans 80–174; that stretch reads RVHSILISRS…RLVCVGWIES (95 aa). Fe cation contacts are provided by H98, D100, and H155. R165 is a 2-oxoglutarate binding site.

The cofactor is Fe(2+). L-ascorbate serves as cofactor.

This chain is PKHD-type hydroxylase Syncc9902_2001, found in Synechococcus sp. (strain CC9902).